Reading from the N-terminus, the 244-residue chain is Chlorosome protein I (244 aa).

Residues 1 to 95 (MNLIINDKTA…TVKVLSRPEE (95 aa)) form the 2Fe-2S ferredoxin-type domain. Residues C33, C39, C42, and C77 each coordinate [2Fe-2S] cluster.

The cofactor is [2Fe-2S] cluster.

It is found in the chlorosome. Its function is as follows. Could play a direct role in the oxidation or reduction of the quenching species formed in the chlorosome. This is Chlorosome protein I (csmI) from Chlorobaculum tepidum (strain ATCC 49652 / DSM 12025 / NBRC 103806 / TLS) (Chlorobium tepidum).